The chain runs to 447 residues: Hemogen (447 aa).

The disordered stretch occupies residues 1 to 91 (MDLGKDQSLS…EMKVELPSQL (91 aa)). Residues 7–86 (QSLSKLHQTP…RQQNTEMKVE (80 aa)) are necessary for nuclear localization. Composition is skewed to basic and acidic residues over residues 14 to 25 (QTPDHHQEESHV) and 35 to 49 (RNRE…EAQE). Over residues 59-78 (EKKHKRQRTGKRSERGRKRQ) the composition is skewed to basic residues. Ser89 and Ser122 each carry phosphoserine. Residues 137-156 (QESVTLQENSSEYQATAVQN) form a disordered region. Ser200 carries the phosphoserine modification. Disordered stretches follow at residues 210–280 (AKVL…MAVP) and 306–337 (AMSK…PGSE). Thr217 is modified (phosphothreonine). Basic and acidic residues predominate over residues 306 to 316 (AMSKDPSHKTT).

The protein resides in the nucleus. Its function is as follows. Regulates the proliferation and differentiation of hematopoietic cells. Overexpression block the TPA-induced megakaryocytic differentiation in the K562 cell model. May also prevent cell apoptosis through the activation of the nuclear factor-kappa B (NF-kB). The polypeptide is Hemogen (HEMGN) (Bos taurus (Bovine)).